Consider the following 455-residue polypeptide: Ribulose bisphosphate carboxylase large chain (455 aa).

At Lys5 the chain carries N6,N6,N6-trimethyllysine. 2 residues coordinate substrate: Asn114 and Thr164. Lys166 acts as the Proton acceptor in catalysis. Residue Lys168 coordinates substrate. 3 residues coordinate Mg(2+): Lys192, Asp194, and Glu195. Residue Lys192 is modified to N6-carboxylysine. Residue His285 is the Proton acceptor of the active site. Residues Arg286, His318, and Ser370 each contribute to the substrate site.

It belongs to the RuBisCO large chain family. Type I subfamily. As to quaternary structure, heterohexadecamer of 8 large chains and 8 small chains; disulfide-linked. The disulfide link is formed within the large subunit homodimers. Requires Mg(2+) as cofactor. Post-translationally, the disulfide bond which can form in the large chain dimeric partners within the hexadecamer appears to be associated with oxidative stress and protein turnover.

It is found in the plastid. It localises to the chloroplast. The catalysed reaction is 2 (2R)-3-phosphoglycerate + 2 H(+) = D-ribulose 1,5-bisphosphate + CO2 + H2O. It catalyses the reaction D-ribulose 1,5-bisphosphate + O2 = 2-phosphoglycolate + (2R)-3-phosphoglycerate + 2 H(+). Its function is as follows. RuBisCO catalyzes two reactions: the carboxylation of D-ribulose 1,5-bisphosphate, the primary event in carbon dioxide fixation, as well as the oxidative fragmentation of the pentose substrate in the photorespiration process. Both reactions occur simultaneously and in competition at the same active site. This chain is Ribulose bisphosphate carboxylase large chain, found in Lupinus luteus (European yellow lupine).